We begin with the raw amino-acid sequence, 69 residues long: Light-harvesting protein B-870 beta chain (69 aa).

Positions 1-2 are excised as a propeptide; it reads MA. The Cytoplasmic portion of the chain corresponds to 3-22; sequence EVKQESLSGITEGEAKEFHK. The a bacteriochlorophyll site is built by H21 and H39. The helical transmembrane segment at 23–45 threads the bilayer; the sequence is IFTSSILVFFGVAAFAHLLVWIW. Over 46–56 the chain is Periplasmic; that stretch reads RPWVPGPNGYS. A propeptide spanning residues 57 to 69 is cleaved from the precursor; sequence ALETLTQTLTYLS.

The protein belongs to the antenna complex beta subunit family. As to quaternary structure, the core complex is formed by different alpha and beta chains, binding bacteriochlorophyll molecules, and arranged most probably in tetrameric structures disposed around the reaction center. The non-pigmented gamma chains may constitute additional components.

The protein localises to the cell inner membrane. In terms of biological role, antenna complexes are light-harvesting systems, which transfer the excitation energy to the reaction centers. The protein is Light-harvesting protein B-870 beta chain of Rhodospirillum rubrum (strain ATCC 11170 / ATH 1.1.1 / DSM 467 / LMG 4362 / NCIMB 8255 / S1).